Consider the following 556-residue polypeptide: 2-succinyl-5-enolpyruvyl-6-hydroxy-3-cyclohexene-1-carboxylate synthase (556 aa).

Belongs to the TPP enzyme family. MenD subfamily. In terms of assembly, homodimer. It depends on Mg(2+) as a cofactor. The cofactor is Mn(2+). Thiamine diphosphate is required as a cofactor.

It carries out the reaction isochorismate + 2-oxoglutarate + H(+) = 5-enolpyruvoyl-6-hydroxy-2-succinyl-cyclohex-3-ene-1-carboxylate + CO2. It participates in quinol/quinone metabolism; 1,4-dihydroxy-2-naphthoate biosynthesis; 1,4-dihydroxy-2-naphthoate from chorismate: step 2/7. Its pathway is quinol/quinone metabolism; menaquinone biosynthesis. Its function is as follows. Catalyzes the thiamine diphosphate-dependent decarboxylation of 2-oxoglutarate and the subsequent addition of the resulting succinic semialdehyde-thiamine pyrophosphate anion to isochorismate to yield 2-succinyl-5-enolpyruvyl-6-hydroxy-3-cyclohexene-1-carboxylate (SEPHCHC). The sequence is that of 2-succinyl-5-enolpyruvyl-6-hydroxy-3-cyclohexene-1-carboxylate synthase from Salmonella typhimurium (strain LT2 / SGSC1412 / ATCC 700720).